The following is a 367-amino-acid chain: Cobalt-precorrin-5B C(1)-methyltransferase (367 aa).

The protein belongs to the CbiD family.

The enzyme catalyses Co-precorrin-5B + S-adenosyl-L-methionine = Co-precorrin-6A + S-adenosyl-L-homocysteine. It participates in cofactor biosynthesis; adenosylcobalamin biosynthesis; cob(II)yrinate a,c-diamide from sirohydrochlorin (anaerobic route): step 6/10. In terms of biological role, catalyzes the methylation of C-1 in cobalt-precorrin-5B to form cobalt-precorrin-6A. The chain is Cobalt-precorrin-5B C(1)-methyltransferase from Leptospira interrogans serogroup Icterohaemorrhagiae serovar Lai (strain 56601).